Consider the following 324-residue polypeptide: tRNA pseudouridine synthase B (324 aa).

D49 functions as the Nucleophile in the catalytic mechanism. Residues 87–107 (RSTDDLEGQPTKTSDKRPSRE) form a disordered region.

The protein belongs to the pseudouridine synthase TruB family. Type 1 subfamily.

The catalysed reaction is uridine(55) in tRNA = pseudouridine(55) in tRNA. Functionally, responsible for synthesis of pseudouridine from uracil-55 in the psi GC loop of transfer RNAs. The sequence is that of tRNA pseudouridine synthase B from Brucella canis (strain ATCC 23365 / NCTC 10854 / RM-666).